The following is a 310-amino-acid chain: M1-specific T cell receptor beta chain (310 aa).

The N-terminal stretch at 1–21 is a signal peptide; that stretch reads MSNQVLCCVVLCLLGANTVDG. Residues 22-114 are t cell receptor beta variable 19; sequence GITQSPKYLF…TAFYLCASSI (93 aa). Residues 34–131 enclose the Ig-like V-type domain; sequence EGQNVTLSCE…FGPGTRLTVT (98 aa). N-linked (GlcNAc...) asparagine glycosylation occurs at asparagine 37. Residues cysteine 42 and cysteine 110 are joined by a disulfide bond. The interval 46–50 is CDR1; the sequence is LNHDA. Position 49 (aspartate 49) interacts with a peptide antigen. The CDR2 stretch occupies residues 68-73; that stretch reads SQIVND. The tract at residues 110 to 122 is CDR3; it reads CASSIRSSYEQYF. Residues 117 to 131 are t cell receptor beta joining 2-7; sequence SYEQYFGPGTRLTVT. The tract at residues 133–310 is t cell receptor beta constant 2; the sequence is DLKNVFPPKV…AMVKRKDSRG (178 aa). Residues 140–249 enclose the Ig-like C1-type domain; it reads PKVAVFEPSE…WTQDRAKPVT (110 aa). A disulfide bridge connects residues cysteine 162 and cysteine 227. Residue asparagine 201 is glycosylated (N-linked (GlcNAc...) asparagine). The segment at 262–276 is connecting peptide; the sequence is CGFTSESYQQGVLSA. Residues 277–299 form a helical membrane-spanning segment; that stretch reads TILYEILLGKATLYAVLVSALVL. Residues 300-310 are Cytoplasmic-facing; the sequence is MAMVKRKDSRG.

In terms of assembly, disulfide-linked heterodimer with TRAV27*01J42*01C*01 alpha chain. The TR primarily interacts via its CDR3-beta domain with M/matrix protein 1-derived peptide (GILGFVFTL) displayed by HLA-A*02.01 in a 'peg-notch' recognition mode. The alpha-beta TR associates with the transmembrane signaling CD3 coreceptor proteins to form the TR-CD3 (TCR). The assembly of alpha-beta TR heterodimers with CD3 occurs in the endoplasmic reticulum where a single alpha-beta TR heterodimer associates with one CD3D-CD3E heterodimer, one CD3G-CD3E heterodimer and one CD247 homodimer forming a stable octameric structure. CD3D-CD3E and CD3G-CD3E heterodimers preferentially associate with TR alpha and TR beta chains (via TM domain), respectively. The association of the CD247 homodimer is the last step of TCR assembly in the endoplasmic reticulum and is required for transport to the cell surface. As to expression, expressed in M/matrix protein 1-specific effector memory CD8-positive T cells readily detectable in the peripheral blood, secondary lymphoid organs and lung (primary site of infection) of IAV infected individuals.

It is found in the cell membrane. In terms of biological role, the beta chain of TRAV27*01J42*01C*01/TRBV19*01J2S7*01C*02 alpha-beta T cell receptor (TR) clonotype that is specific for HLA-A*02:01-restricted M/matrix protein 1 immunodominant epitope GILGFVFTL of influenza A virus (IAV). Classified as a public TCR clonotype, it is preferentially selected in effector memory CD8-positive T cells among multiple HLA-A*02:01 carriers/individuals and confers long-lived immunity against IAV infection. Can cross-recognize sporadically emerging IAV variants by molecular mimicry, inducing immunity toward different influenza strains. Antigen recognition initiates TR-CD3 clustering on the cell surface and intracellular activation of LCK that phosphorylates the ITAM motifs of CD3G, CD3D, CD3E and CD247 enabling the recruitment of ZAP70. In turn, ZAP70 phosphorylates LAT, which recruits numerous signaling molecules to form the LAT signalosome. The LAT signalosome propagates signal branching to three major signaling pathways, the calcium, the mitogen-activated protein kinase (MAPK) kinase and the nuclear factor NF-kappa-B (NF-kB) pathways, leading to the mobilization of transcription factors that are critical for gene expression and essential for T cell differentiation into effector/memory T cells. This Homo sapiens (Human) protein is M1-specific T cell receptor beta chain.